The following is a 222-amino-acid chain: U-scoloptoxin(11)-Sm5a (222 aa).

Belongs to the scoloptoxin-11 family. Post-translationally, contains 8 disulfide bonds. In terms of tissue distribution, expressed by the venom gland.

The protein localises to the secreted. The chain is U-scoloptoxin(11)-Sm5a from Scolopendra morsitans (Tanzanian blue ringleg centipede).